The following is a 194-amino-acid chain: Endo-1,4-beta-xylanase (194 aa).

Glycine 1 carries the N-acetylglycine modification. The 191-residue stretch at glycine 1 to alanine 191 folds into the GH11 domain. Residue glutamate 86 is the Nucleophile of the active site. Cysteines 110 and 154 form a disulfide. Residue glutamate 178 is the Proton donor of the active site.

The protein belongs to the glycosyl hydrolase 11 (cellulase G) family.

It carries out the reaction Endohydrolysis of (1-&gt;4)-beta-D-xylosidic linkages in xylans.. Its pathway is glycan degradation; xylan degradation. This Byssochlamys spectabilis (Paecilomyces variotii) protein is Endo-1,4-beta-xylanase.